Consider the following 224-residue polypeptide: Charged multivesicular body protein 4b (224 aa).

The segment at 1–23 (MSVFGKLFGAGGGKAGKGGPTPQ) is disordered. The residue at position 2 (S2) is an N-acetylserine. The segment at 2-153 (SVFGKLFGAG…EISTAISKPV (152 aa)) is intramolecular interaction with C-terminus. At K6 the chain carries N6-acetyllysine. A compositionally biased stretch (gly residues) spans 8 to 19 (FGAGGGKAGKGG). A coiled-coil region spans residues 23 to 183 (QEAIQRLRDT…EELDKNLLEI (161 aa)). K114 carries the post-translational modification N6-acetyllysine. An intramolecular interaction with N-terminus region spans residues 154–224 (GFGEEFDEDE…KELENWAGSM (71 aa)). Phosphoserine occurs at positions 184 and 223. A disordered region spans residues 185-224 (GPETVPLPNVPSVALPSKPAKKKEEEDDDMKELENWAGSM).

It belongs to the SNF7 family. As to quaternary structure, probable core component of the endosomal sorting required for transport complex III (ESCRT-III). ESCRT-III components are thought to multimerize to form a flat lattice on the perimeter membrane of the endosome. Several assembly forms of ESCRT-III may exist that interact and act sequentially. Interacts with CHMP6 and CHMP4C. Interacts with PDCD6IP; the interaction is direct. Interacts with VPS4A; the interaction is direct. Interacts with VPS4B; the interaction is direct. Interacts with CHMP7. Interacts with CFTR; the interaction requires misfolded CFTR. Interacts with PTPN23. Interacts with CC2D1B. Post-translationally, ISGylated. Isgylation weakens its interaction with VPS4A.

It is found in the cytoplasm. Its subcellular location is the cytosol. It localises to the late endosome membrane. The protein resides in the midbody. The protein localises to the nucleus envelope. Functionally, probable core component of the endosomal sorting required for transport complex III (ESCRT-III) which is involved in multivesicular bodies (MVBs) formation and sorting of endosomal cargo proteins into MVBs. MVBs contain intraluminal vesicles (ILVs) that are generated by invagination and scission from the limiting membrane of the endosome and mostly are delivered to lysosomes enabling degradation of membrane proteins, such as stimulated growth factor receptors, lysosomal enzymes and lipids. The MVB pathway appears to require the sequential function of ESCRT-O, -I,-II and -III complexes. ESCRT-III proteins mostly dissociate from the invaginating membrane before the ILV is released. The ESCRT machinery also functions in topologically equivalent membrane fission events, such as the terminal stages of cytokinesis. Together with SPAST, the ESCRT-III complex promotes nuclear envelope sealing and mitotic spindle disassembly during late anaphase. Plays a role in the endosomal sorting pathway. ESCRT-III proteins are believed to mediate the necessary vesicle extrusion and/or membrane fission activities, possibly in conjunction with the AAA ATPase VPS4. When overexpressed, membrane-assembled circular arrays of CHMP4B filaments can promote or stabilize negative curvature and outward budding. CHMP4A/B/C are required for the exosomal release of SDCBP, CD63 and syndecan. Majority of the protein exists in a folded closed conformation. In Mus musculus (Mouse), this protein is Charged multivesicular body protein 4b (Chmp4b).